A 1189-amino-acid chain; its full sequence is Nucleolar protein NET1 (1189 aa).

A phosphoserine mark is found at S60 and S166. Disordered stretches follow at residues 160-260 (SKLN…ISSG) and 345-1189 (TAQD…FKKK). The span at 166 to 180 (SPQSVQPQQQIPSSS) shows a compositional bias: low complexity. Positions 200–210 (IRSATNGSMRV) are enriched in polar residues. Residues S231 and S252 each carry the phosphoserine modification. The segment covering 244–253 (LPPPTQPQSP) has biased composition (pro residues). Positions 368–381 (PEPRISEIEKELKE) are enriched in basic and acidic residues. A compositionally biased stretch (low complexity) spans 391 to 407 (PAKAAKIPMKKPYLENG). Residues 432 to 450 (ASLQRSQSSIADNNGSPVK) are compositionally biased toward polar residues. Phosphoserine is present on residues S437, S439, S447, and S452. The segment covering 470-486 (ASNTSITKSSNGESWGK) has biased composition (polar residues). At S497 the chain carries Phosphoserine. Residues 526 to 543 (NQVREKEDTNDKLLEKEI) are compositionally biased toward basic and acidic residues. Positions 590–601 (IEDDGNDNDEVD) are enriched in acidic residues. The span at 641–657 (SRTSGNSKNSKPYTTVL) shows a compositional bias: polar residues. A compositionally biased stretch (basic and acidic residues) spans 659-668 (KDIDNSKPDP). T676 carries the phosphothreonine modification. Residues 682–691 (KRAAQLLAGA) are compositionally biased toward low complexity. Positions 692-702 (KKNEVPQKSTE) are enriched in basic and acidic residues. Acidic residues predominate over residues 710 to 725 (TDDESESGIETDFSSD). The segment covering 756–777 (KDSKIINKEVDEERNDKRDSQK) has biased composition (basic and acidic residues). Over residues 778 to 792 (KSAVSESSVTNSKIS) the composition is skewed to polar residues. The segment covering 806–815 (KQNEATKVET) has biased composition (basic and acidic residues). Residues 822 to 833 (SSFPVVGGSPSV) show a composition bias toward low complexity. Residue S830 is modified to Phosphoserine. 3 stretches are compositionally biased toward basic and acidic residues: residues 884–897 (DLNK…EPEK), 905–919 (ANDK…DSKS), and 945–954 (ANDKLKDLKA). A compositionally biased stretch (low complexity) spans 969–999 (SNEKNNSSANDDDSSSSGSSTEDESSSSSSS). The segment covering 1023 to 1039 (RSSSKIEAPSPSVNKKI) has biased composition (polar residues). The residue at position 1042 (T1042) is a Phosphothreonine. Residues 1055 to 1070 (SSPPSVKSKTTSNPSS) show a composition bias toward low complexity. Residues S1056 and S1059 each carry the phosphoserine modification. A compositionally biased stretch (basic and acidic residues) spans 1095–1109 (PDVKEKTSKSNEKSQ). Low complexity-rich tracts occupy residues 1123-1137 (DSDS…SDSS) and 1158-1169 (SFISAKSASAAL).

This sequence to yeast YKR010c. In terms of assembly, component of the RENT complex which is composed of at least NET1, CDC14 and SIR2. Interacts with NSI1. Phosphorylated by CDC5.

It is found in the nucleus. The protein localises to the nucleolus. Its function is as follows. Has a role in chromosome maintenance and is involved in mitotic exit. Inhibits the action of CDC14 by sequestering it in the nucleolus. Also binds to RNA polymerase I and stimulates rRNA synthesis. Influences RDNA chromatin by tethering SIR2 to rDNA in the nucleolus. The chain is Nucleolar protein NET1 (NET1) from Saccharomyces cerevisiae (strain ATCC 204508 / S288c) (Baker's yeast).